The following is a 338-amino-acid chain: Tryptophan--tRNA ligase (338 aa).

ATP is bound by residues 12–14 (QPT) and 20–21 (GN). Residues 13 to 21 (PTGDLHIGN) carry the 'HIGH' region motif. Asp-136 lines the L-tryptophan pocket. ATP-binding positions include 148 to 150 (GED), Ile-191, and 200 to 204 (KMSKS). Residues 200-204 (KMSKS) carry the 'KMSKS' region motif.

Belongs to the class-I aminoacyl-tRNA synthetase family. Homodimer.

The protein localises to the cytoplasm. It catalyses the reaction tRNA(Trp) + L-tryptophan + ATP = L-tryptophyl-tRNA(Trp) + AMP + diphosphate + H(+). Functionally, catalyzes the attachment of tryptophan to tRNA(Trp). The polypeptide is Tryptophan--tRNA ligase (Prochlorococcus marinus subsp. pastoris (strain CCMP1986 / NIES-2087 / MED4)).